We begin with the raw amino-acid sequence, 1137 residues long: DNA-directed RNA polymerase III subunit RPC2 (1137 aa).

The C4-type zinc finger occupies 1084 to 1099 (DVCRTCGRMAYCSWCH). 4 residues coordinate Zn(2+): Cys-1086, Cys-1089, Cys-1098, and Cys-1101.

This sequence belongs to the RNA polymerase beta chain family. Component of the RNA polymerase III (Pol III) complex consisting of 17 subunits.

It localises to the nucleus. The enzyme catalyses RNA(n) + a ribonucleoside 5'-triphosphate = RNA(n+1) + diphosphate. Its function is as follows. DNA-dependent RNA polymerase catalyzes the transcription of DNA into RNA using the four ribonucleoside triphosphates as substrates. Second largest core component of RNA polymerase III which synthesizes small RNAs, such as 5S rRNA and tRNAs. Proposed to contribute to the polymerase catalytic activity and forms the polymerase active center together with the largest subunit. Pol III is composed of mobile elements and Polr3B is part of the core element with the central large cleft and probably a clamp element that moves to open and close the cleft. The chain is DNA-directed RNA polymerase III subunit RPC2 from Drosophila melanogaster (Fruit fly).